A 171-amino-acid chain; its full sequence is MAVNNRVKITNDIELKDRLVAINRVTKVTKGGRTFSFSAIVVVGNEDGIIGWGLGKAGEVTAAIAKGVEAAKKNLTRVPVLKGTVPHEQSAKFGGAEVFIKPASTGTGVVAGGAMRAVLESVGVTDVLAKSKGSSNPHNLVKATILALGEMRDARMVAQNRGVSMEKVFRG.

The S5 DRBM domain maps to Leu-15 to Val-78.

It belongs to the universal ribosomal protein uS5 family. Part of the 30S ribosomal subunit. Contacts proteins S4 and S8.

With S4 and S12 plays an important role in translational accuracy. Functionally, located at the back of the 30S subunit body where it stabilizes the conformation of the head with respect to the body. The protein is Small ribosomal subunit protein uS5 of Phocaeicola vulgatus (strain ATCC 8482 / DSM 1447 / JCM 5826 / CCUG 4940 / NBRC 14291 / NCTC 11154) (Bacteroides vulgatus).